Consider the following 162-residue polypeptide: Large ribosomal subunit protein uL15 (162 aa).

The span at 1-13 (MNLNELRDNEGSR) shows a compositional bias: basic and acidic residues. The segment at 1–39 (MNLNELRDNEGSRYRKKRLGRGIGSGKGKTSGRGVKGQK) is disordered. Residues 21–35 (RGIGSGKGKTSGRGV) show a composition bias toward gly residues.

This sequence belongs to the universal ribosomal protein uL15 family. Part of the 50S ribosomal subunit.

Functionally, binds to the 23S rRNA. The sequence is that of Large ribosomal subunit protein uL15 from Gluconobacter oxydans (strain 621H) (Gluconobacter suboxydans).